The sequence spans 313 residues: Putative S-adenosyl-L-methionine-dependent methyltransferase MAP_4064c (313 aa).

Residues aspartate 129 and 158-159 (DL) each bind S-adenosyl-L-methionine.

The protein belongs to the UPF0677 family.

Exhibits S-adenosyl-L-methionine-dependent methyltransferase activity. This is Putative S-adenosyl-L-methionine-dependent methyltransferase MAP_4064c from Mycolicibacterium paratuberculosis (strain ATCC BAA-968 / K-10) (Mycobacterium paratuberculosis).